The chain runs to 321 residues: Major immediate early protein (321 aa).

The RING-type zinc-finger motif lies at 86-139 (CSVCLETYSQQSNDTCPFLIPTTCDHGFCFKCVINLQSNAMNIPHSTVCCPLCN). The interval 228–249 (LIEENTRLNEQIQELQHQVRTL) is leucine-zipper.

Its subcellular location is the host nucleus. In terms of biological role, plays some regulatory role in both viral DNA replication and transcriptional transactivation. This chain is Major immediate early protein (PE38), found in Lepidoptera (butterflies and moths).